Reading from the N-terminus, the 568-residue chain is Nitrite reductase (568 aa).

Positions 1 to 25 are cleaved as a signal peptide; it reads MPFGKPLVGTLLASLTLLGLATAHA. Residues 26-54 are N-terminal tail; the sequence is KDDMKAAEQYQGAASAVDPAHVVRTNGAP. Positions 55–140 constitute a Cytochrome c domain; that stretch reads DMSESEFNEA…AKYIQHTPPQ (86 aa). The heme c site is built by Cys72, Cys75, His76, Arg96, Thr109, and Met113. The segment at 141–568 is D1-heme domain; it reads PPEWGMPEMR…NVYNTQHDVY (428 aa). 6 residues coordinate heme d1: His207, Arg250, Ser251, Tyr270, Arg397, and Gln508.

In terms of assembly, homodimer. Heme c serves as cofactor. It depends on heme as a cofactor.

Its subcellular location is the periplasm. It catalyses the reaction nitric oxide + Fe(III)-[cytochrome c] + H2O = Fe(II)-[cytochrome c] + nitrite + 2 H(+). The enzyme catalyses A + NH4(+) + H2O = hydroxylamine + AH2 + H(+). In Pseudomonas aeruginosa (strain ATCC 15692 / DSM 22644 / CIP 104116 / JCM 14847 / LMG 12228 / 1C / PRS 101 / PAO1), this protein is Nitrite reductase (nirS).